The chain runs to 135 residues: Universal stress protein Aq_178 (135 aa).

This sequence belongs to the universal stress protein A family.

This Aquifex aeolicus (strain VF5) protein is Universal stress protein Aq_178.